Reading from the N-terminus, the 105-residue chain is Flowering-promoting factor 1-like protein 5 (105 aa).

The protein belongs to the FPF1 family.

The sequence is that of Flowering-promoting factor 1-like protein 5 from Oryza sativa subsp. japonica (Rice).